A 171-amino-acid polypeptide reads, in one-letter code: ATP synthase subunit b (171 aa).

A helical transmembrane segment spans residues 3–23 (KFLFFIFVFVGISFAGDDTAT).

Belongs to the ATPase B chain family. F-type ATPases have 2 components, F(1) - the catalytic core - and F(0) - the membrane proton channel. F(1) has five subunits: alpha(3), beta(3), gamma(1), delta(1), epsilon(1). F(0) has three main subunits: a(1), b(2) and c(10-14). The alpha and beta chains form an alternating ring which encloses part of the gamma chain. F(1) is attached to F(0) by a central stalk formed by the gamma and epsilon chains, while a peripheral stalk is formed by the delta and b chains.

The protein resides in the cell inner membrane. In terms of biological role, f(1)F(0) ATP synthase produces ATP from ADP in the presence of a proton or sodium gradient. F-type ATPases consist of two structural domains, F(1) containing the extramembraneous catalytic core and F(0) containing the membrane proton channel, linked together by a central stalk and a peripheral stalk. During catalysis, ATP synthesis in the catalytic domain of F(1) is coupled via a rotary mechanism of the central stalk subunits to proton translocation. Its function is as follows. Component of the F(0) channel, it forms part of the peripheral stalk, linking F(1) to F(0). The protein is ATP synthase subunit b of Campylobacter hominis (strain ATCC BAA-381 / DSM 21671 / CCUG 45161 / LMG 19568 / NCTC 13146 / CH001A).